The following is a 198-amino-acid chain: Holliday junction branch migration complex subunit RuvA (198 aa).

Residues 1-63 (MYDYIKGQLT…EDAHLLFGFH (63 aa)) form a domain I region. The interval 64 to 142 (TEDEKDVFLK…EAPQETGNTK (79 aa)) is domain II. The tract at residues 143 to 147 (ARSNK) is flexible linker. Positions 148 to 198 (AGNTQLDEAIEALLALGYKAAELKKIRAFFEGTSETAEQYIKSALKLLMKG) are domain III.

It belongs to the RuvA family. As to quaternary structure, homotetramer. Forms an RuvA(8)-RuvB(12)-Holliday junction (HJ) complex. HJ DNA is sandwiched between 2 RuvA tetramers; dsDNA enters through RuvA and exits via RuvB. An RuvB hexamer assembles on each DNA strand where it exits the tetramer. Each RuvB hexamer is contacted by two RuvA subunits (via domain III) on 2 adjacent RuvB subunits; this complex drives branch migration. In the full resolvosome a probable DNA-RuvA(4)-RuvB(12)-RuvC(2) complex forms which resolves the HJ.

The protein localises to the cytoplasm. Functionally, the RuvA-RuvB-RuvC complex processes Holliday junction (HJ) DNA during genetic recombination and DNA repair, while the RuvA-RuvB complex plays an important role in the rescue of blocked DNA replication forks via replication fork reversal (RFR). RuvA specifically binds to HJ cruciform DNA, conferring on it an open structure. The RuvB hexamer acts as an ATP-dependent pump, pulling dsDNA into and through the RuvAB complex. HJ branch migration allows RuvC to scan DNA until it finds its consensus sequence, where it cleaves and resolves the cruciform DNA. In Streptococcus pyogenes serotype M28 (strain MGAS6180), this protein is Holliday junction branch migration complex subunit RuvA.